The chain runs to 292 residues: G1/S-specific cyclin-D3 (292 aa).

The Cyclin N-terminal domain maps to 27 to 152 (VLQSLLRLEE…LVLGKLKWDL (126 aa)). The interval 254–292 (SLREASQTSSSPAPKAPRGSSSQGPSQTSTPTDVTAIHL) is disordered. Phosphoserine is present on residues Ser-264 and Ser-279. Low complexity predominate over residues 272-285 (GSSSQGPSQTSTPT). At Thr-283 the chain carries Phosphothreonine.

This sequence belongs to the cyclin family. Cyclin D subfamily. Interacts with the CDK4 and CDK6 protein kinases to form a serine/threonine kinase holoenzyme complex. The cyclin subunit imparts substrate specificity to the complex. Interacts with ATF5. Interacts with EIF3K. Component of the ternary complex cyclin D/CDK4/CDKN1B required for nuclear translocation and modulation of CDK4-mediated kinase activity. Can form similar complexes with either CDKN1A or CDKN2A. Post-translationally, phosphorylation at Thr-283 by MAP kinases is required for ubiquitination and degradation by the DCX(AMBRA1) complex. Ubiquitinated by the DCX(AMBRA1) complex during the transition from G1 to S cell phase, leading to its degradation: ubiquitination is dependent on Thr-283 phosphorylation. The DCX(AMBRA1) complex represents the major regulator of CCND3 stability during the G1/S transition. Polyubiquitinated by the SCF(FBXL2) complex, leading to proteasomal degradation.

It localises to the nucleus. Its subcellular location is the cytoplasm. Its function is as follows. Regulatory component of the cyclin D3-CDK4 (DC) complex that phosphorylates and inhibits members of the retinoblastoma (RB) protein family including RB1 and regulates the cell-cycle during G(1)/S transition. Phosphorylation of RB1 allows dissociation of the transcription factor E2F from the RB/E2F complex and the subsequent transcription of E2F target genes which are responsible for the progression through the G(1) phase. Hypophosphorylates RB1 in early G(1) phase. Cyclin D-CDK4 complexes are major integrators of various mitogenenic and antimitogenic signals. Component of the ternary complex, cyclin D3/CDK4/CDKN1B, required for nuclear translocation and activity of the cyclin D-CDK4 complex. Shows transcriptional coactivator activity with ATF5 independently of CDK4. The polypeptide is G1/S-specific cyclin-D3 (Homo sapiens (Human)).